A 603-amino-acid polypeptide reads, in one-letter code: Elongation factor 4 (603 aa).

Residues 7-189 (SRIRNFSIIA…AIVQQVPPPA (183 aa)) enclose the tr-type G domain. GTP is bound by residues 19-24 (DHGKST) and 136-139 (NKID).

This sequence belongs to the TRAFAC class translation factor GTPase superfamily. Classic translation factor GTPase family. LepA subfamily.

It is found in the cell inner membrane. The enzyme catalyses GTP + H2O = GDP + phosphate + H(+). Its function is as follows. Required for accurate and efficient protein synthesis under certain stress conditions. May act as a fidelity factor of the translation reaction, by catalyzing a one-codon backward translocation of tRNAs on improperly translocated ribosomes. Back-translocation proceeds from a post-translocation (POST) complex to a pre-translocation (PRE) complex, thus giving elongation factor G a second chance to translocate the tRNAs correctly. Binds to ribosomes in a GTP-dependent manner. The chain is Elongation factor 4 from Synechocystis sp. (strain ATCC 27184 / PCC 6803 / Kazusa).